The following is a 566-amino-acid chain: ATP-binding protein SyrD (566 aa).

Positions 22-301 (HPWLTFFTLL…LVSAMPMLAQ (280 aa)) constitute an ABC transmembrane type-1 domain. The next 6 helical transmembrane spans lie at 24-44 (WLTF…IAVV), 61-81 (LFWF…ASLF), 132-152 (LLIM…IAYL), 158-178 (VVFA…LLFF), 250-270 (QLTL…FAVI), and 279-299 (VLAV…MPML). One can recognise an ABC transporter domain in the interval 343–566 (IQLKNVHMNY…VKCAVEGKRA (224 aa)). Residue 380–387 (GGNGCGKS) coordinates ATP.

The protein belongs to the ABC transporter superfamily. Dimer.

It is found in the cell inner membrane. Its function is as follows. ATP-driven efflux pump necessary for the secretion of syringomycin. May specifically bind syringomycin and translocate it to the periplasmic space. SyrD is also required for full expression of the syrB gene. The polypeptide is ATP-binding protein SyrD (syrD) (Pseudomonas syringae pv. syringae).